Here is a 98-residue protein sequence, read N- to C-terminus: MTTIYLNLILAFTLALSGVLIYRSHLLSTLLCLEGMMLSLFILMALTISHFHMFSLSMAPLILLVFSACEAGVGLALLVKTSNAHGNDHVQSLNLLQC.

Helical transmembrane passes span 1–21 (MTTIYLNLILAFTLALSGVLI), 26–46 (LLSTLLCLEGMMLSLFILMAL), and 59–79 (APLILLVFSACEAGVGLALLV).

The protein belongs to the complex I subunit 4L family. In terms of assembly, core subunit of respiratory chain NADH dehydrogenase (Complex I) which is composed of 45 different subunits.

It localises to the mitochondrion inner membrane. The enzyme catalyses a ubiquinone + NADH + 5 H(+)(in) = a ubiquinol + NAD(+) + 4 H(+)(out). In terms of biological role, core subunit of the mitochondrial membrane respiratory chain NADH dehydrogenase (Complex I) which catalyzes electron transfer from NADH through the respiratory chain, using ubiquinone as an electron acceptor. Part of the enzyme membrane arm which is embedded in the lipid bilayer and involved in proton translocation. The sequence is that of NADH-ubiquinone oxidoreductase chain 4L (MT-ND4L) from Rhyncholestes raphanurus (Chilean shrew opossum).